Consider the following 341-residue polypeptide: 4-hydroxy-2-oxovalerate aldolase (341 aa).

The region spanning 5 to 257 (ITLHDMTLRD…ETGVDVFRIA (253 aa)) is the Pyruvate carboxyltransferase domain. 13 to 14 (RD) lines the substrate pocket. Asp-14 provides a ligand contact to Mn(2+). The active-site Proton acceptor is His-17. Residues Ser-167 and His-196 each coordinate substrate. 2 residues coordinate Mn(2+): His-196 and His-198. Tyr-287 lines the substrate pocket.

The protein belongs to the 4-hydroxy-2-oxovalerate aldolase family.

It catalyses the reaction (S)-4-hydroxy-2-oxopentanoate = acetaldehyde + pyruvate. This Cupriavidus taiwanensis (strain DSM 17343 / BCRC 17206 / CCUG 44338 / CIP 107171 / LMG 19424 / R1) (Ralstonia taiwanensis (strain LMG 19424)) protein is 4-hydroxy-2-oxovalerate aldolase (mhpE).